Reading from the N-terminus, the 265-residue chain is tRNA (guanine-N(1)-)-methyltransferase (265 aa).

S-adenosyl-L-methionine is bound by residues Gly-119 and 139 to 144; that span reads VGDYIL.

This sequence belongs to the RNA methyltransferase TrmD family. As to quaternary structure, homodimer.

The protein localises to the cytoplasm. It catalyses the reaction guanosine(37) in tRNA + S-adenosyl-L-methionine = N(1)-methylguanosine(37) in tRNA + S-adenosyl-L-homocysteine + H(+). Specifically methylates guanosine-37 in various tRNAs. This chain is tRNA (guanine-N(1)-)-methyltransferase, found in Pseudoalteromonas atlantica (strain T6c / ATCC BAA-1087).